Reading from the N-terminus, the 210-residue chain is uncharacterized protein (210 aa).

In terms of domain architecture, PfpI endopeptidase spans 4–180 (RKVYLYVFHT…AVEVLKKLDV (177 aa)). Cys110 serves as the catalytic Nucleophile.

It belongs to the peptidase C56 family.

This is an uncharacterized protein from Bacillus subtilis (strain 168).